Reading from the N-terminus, the 42-residue chain is MADKPDMGEINSFDKAKLKKTETQEKNTLPTKETIEQEKQAK.

2 stretches are compositionally biased toward basic and acidic residues: residues 1–25 (MADKPDMGEINSFDKAKLKKTETQE) and 33–42 (ETIEQEKQAK). The segment at 1-42 (MADKPDMGEINSFDKAKLKKTETQEKNTLPTKETIEQEKQAK) is disordered. At A2 the chain carries N-acetylalanine. K4 carries the N6-acetyllysine modification. S12 is subject to Phosphoserine. The residue at position 15 (K15) is an N6-acetyllysine. Residues T21, T23, and T34 each carry the phosphothreonine modification. K39 is subject to N6-acetyllysine.

Belongs to the thymosin beta family.

The protein resides in the cytoplasm. Its subcellular location is the cytoskeleton. Functionally, plays an important role in the organization of the cytoskeleton. Binds to and sequesters actin monomers (G actin) and therefore inhibits actin polymerization. The polypeptide is Thymosin beta-10 (TMSB10) (Sus scrofa (Pig)).